Reading from the N-terminus, the 592-residue chain is uncharacterized protein (592 aa).

The N-terminal stretch at M1 to A23 is a signal peptide. The active-site Nucleophile is the S37. Residues D294 and H297 contribute to the active site. Residues H334–P592 form the Autotransporter domain. Positions F572–P592 are disordered.

The protein belongs to the 'GDSL' lipolytic enzyme family.

This is an uncharacterized protein from Pseudomonas putida (Arthrobacter siderocapsulatus).